A 95-amino-acid chain; its full sequence is Small ribosomal subunit protein bS6 (95 aa).

Belongs to the bacterial ribosomal protein bS6 family.

In terms of biological role, binds together with bS18 to 16S ribosomal RNA. The sequence is that of Small ribosomal subunit protein bS6 from Clostridium beijerinckii (strain ATCC 51743 / NCIMB 8052) (Clostridium acetobutylicum).